Reading from the N-terminus, the 695-residue chain is Biosynthetic arginine decarboxylase 1 (695 aa).

At lysine 141 the chain carries N6-(pyridoxal phosphate)lysine. 332-342 serves as a coordination point for substrate; sequence LDVGGGLGVDY.

Belongs to the Orn/Lys/Arg decarboxylase class-II family. SpeA subfamily. The cofactor is Mg(2+). Requires pyridoxal 5'-phosphate as cofactor.

The catalysed reaction is L-arginine + H(+) = agmatine + CO2. Its function is as follows. Catalyzes the biosynthesis of agmatine from arginine. In Synechocystis sp. (strain ATCC 27184 / PCC 6803 / Kazusa), this protein is Biosynthetic arginine decarboxylase 1 (speA1).